We begin with the raw amino-acid sequence, 355 residues long: Peptide chain release factor 1 (355 aa).

Position 230 is an N5-methylglutamine (Gln230).

This sequence belongs to the prokaryotic/mitochondrial release factor family. In terms of processing, methylated by PrmC. Methylation increases the termination efficiency of RF1.

The protein localises to the cytoplasm. Functionally, peptide chain release factor 1 directs the termination of translation in response to the peptide chain termination codons UAG and UAA. The sequence is that of Peptide chain release factor 1 from Geobacter sulfurreducens (strain ATCC 51573 / DSM 12127 / PCA).